We begin with the raw amino-acid sequence, 217 residues long: Large ribosomal subunit protein uL3 (217 aa).

Belongs to the universal ribosomal protein uL3 family. Part of the 50S ribosomal subunit. Forms a cluster with proteins L14 and L19.

In terms of biological role, one of the primary rRNA binding proteins, it binds directly near the 3'-end of the 23S rRNA, where it nucleates assembly of the 50S subunit. The chain is Large ribosomal subunit protein uL3 from Mycobacterium marinum (strain ATCC BAA-535 / M).